The chain runs to 234 residues: 2,3-bisphosphoglycerate-dependent phosphoglycerate mutase 1 (234 aa).

Substrate is bound by residues 14 to 21 (RHGQSIWN), 27 to 28 (TG), Arg66, and 93 to 96 (ERHY). His15 serves as the catalytic Tele-phosphohistidine intermediate. Glu93 (proton donor/acceptor) is an active-site residue.

The protein belongs to the phosphoglycerate mutase family. BPG-dependent PGAM subfamily. Homodimer.

It carries out the reaction (2R)-2-phosphoglycerate = (2R)-3-phosphoglycerate. Its pathway is carbohydrate degradation; glycolysis; pyruvate from D-glyceraldehyde 3-phosphate: step 3/5. Functionally, catalyzes the interconversion of 2-phosphoglycerate and 3-phosphoglycerate. The polypeptide is 2,3-bisphosphoglycerate-dependent phosphoglycerate mutase 1 (Nitrosomonas europaea (strain ATCC 19718 / CIP 103999 / KCTC 2705 / NBRC 14298)).